Reading from the N-terminus, the 255-residue chain is 5-oxoprolinase subunit A (255 aa).

The protein belongs to the LamB/PxpA family. In terms of assembly, forms a complex composed of PxpA, PxpB and PxpC.

The catalysed reaction is 5-oxo-L-proline + ATP + 2 H2O = L-glutamate + ADP + phosphate + H(+). Its function is as follows. Catalyzes the cleavage of 5-oxoproline to form L-glutamate coupled to the hydrolysis of ATP to ADP and inorganic phosphate. The sequence is that of 5-oxoprolinase subunit A from Pyrococcus horikoshii (strain ATCC 700860 / DSM 12428 / JCM 9974 / NBRC 100139 / OT-3).